Consider the following 134-residue polypeptide: Small ribosomal subunit protein bS16 (134 aa).

A disordered region spans residues 115–134 (AKLRRRQAKKAAEAAGSAEG).

The protein belongs to the bacterial ribosomal protein bS16 family.

The chain is Small ribosomal subunit protein bS16 from Chlorobaculum tepidum (strain ATCC 49652 / DSM 12025 / NBRC 103806 / TLS) (Chlorobium tepidum).